The chain runs to 544 residues: Chaperonin GroEL (544 aa).

Residues 30-33 (TLGP), 87-91 (DGTTT), G414, 478-480 (NAL), and D494 each bind ATP.

The protein belongs to the chaperonin (HSP60) family. Forms a cylinder of 14 subunits composed of two heptameric rings stacked back-to-back. Interacts with the co-chaperonin GroES.

It localises to the cytoplasm. The enzyme catalyses ATP + H2O + a folded polypeptide = ADP + phosphate + an unfolded polypeptide.. Its function is as follows. Together with its co-chaperonin GroES, plays an essential role in assisting protein folding. The GroEL-GroES system forms a nano-cage that allows encapsulation of the non-native substrate proteins and provides a physical environment optimized to promote and accelerate protein folding. This chain is Chaperonin GroEL, found in Pelotomaculum thermopropionicum (strain DSM 13744 / JCM 10971 / SI).